The primary structure comprises 299 residues: MTYKLYIMTFQNAHFGSGTLDSSKLTFSADRIFSALVLESLKMGKLDAFLAEANQDKFTLTDAFPFQFGPFLPKPIGYPKHDQIDQSVDVKEVRRQAKLSKKLQFLALENVDDYLNGELFENEEHAVIDTVTKNQPHKDGNLYQVATTRFSNDTSLYVIANESDLLNELMSSLQYSGLGGKRSSGFGRFELDIQNIPLELSDRLTKNHSDKVMSLTTALPVDADLEEAMEDGHYLLTKSSGFAFSHATNENYRKQDLYKFASGSTFSKTFEGQIVDVRPLDFPHAVLNYAKPLFFKLEV.

The protein belongs to the CRISPR-associated Csm4 family. In terms of assembly, part of the Csm effector complex that includes at least Cas10(1), Csm2(3), Csm3(5), Csm4(1), Csm5(1) and mature crRNA. The Csm complex is elongated and slightly twisted with a maximal length of 215 Angstroms and a diameter of 75-80 Angstroms. It has been modeled to have a central protein filamant of Csm3 subunits along which the dsRNA helix of paired crRNA and target RNA binds. The filament is capped at one end by Cas10 and Csm4 and at the other end by Csm5; ssDNA is thought to bind to the N-terminal HD domain of Cas10. Csm with a precursor crRNA does not include Csm5, while Cas6, the enzyme probably involved in pre-crRNA processing, is found associated with a subset of the Csm complex.

Its function is as follows. CRISPR (clustered regularly interspaced short palindromic repeat) is an adaptive immune system that provides protection against mobile genetic elements (viruses, transposable elements and conjugative plasmids). CRISPR clusters contain spacers, sequences complementary to antecedent mobile elements, and target invading nucleic acids. CRISPR clusters are transcribed and processed into CRISPR RNA (crRNA). The type III-A Csm effector complex binds crRNA and acts as a crRNA-guided RNase, DNase and cyclic oligoadenylate synthase; binding of target RNA cognate to the crRNA is required for all activities. In a heterologous host this Csm effector complex restricts ssRNA phage MS2, suggesting it may target RNA viruses in vivo. Functionally, csm functions as a non-specific ssDNase. Base-pairing between crRNA and target RNA to form a ternary Csm complex activates a ssDNase activity; target RNA cleavage suppresses the ssDNase, a temporal control that prevents uncontrolled DNA degradation. Viral RNA transcripts probably tether the Csm complex to the viral genome, recruiting Cas10 ssDNA activity which is able to degrade DNA in the transcription bubble, spatially controlling the DNase activity. The subunit probably binds to the 5' handle of the crRNA, helping in discrimination between self- and non-self. The sequence is that of CRISPR system Cms protein Csm4 from Streptococcus thermophilus.